A 381-amino-acid chain; its full sequence is Dual-specificity RNA methyltransferase RlmN (381 aa).

The Proton acceptor role is filled by Glu-86. Positions 105 to 338 (RHARYTICVS…CTIRQSKGLD (234 aa)) constitute a Radical SAM core domain. A disulfide bridge connects residues Cys-112 and Cys-343. [4Fe-4S] cluster contacts are provided by Cys-119, Cys-123, and Cys-126. S-adenosyl-L-methionine is bound by residues 169 to 170 (GE), Ser-201, 224 to 226 (SLH), and Asn-300. Cys-343 functions as the S-methylcysteine intermediate in the catalytic mechanism. Positions 351–381 (ENPKFRANVSGNSAAKTEEKPTNDKTNVSKK) are disordered.

This sequence belongs to the radical SAM superfamily. RlmN family. Requires [4Fe-4S] cluster as cofactor.

It localises to the cytoplasm. The catalysed reaction is adenosine(2503) in 23S rRNA + 2 reduced [2Fe-2S]-[ferredoxin] + 2 S-adenosyl-L-methionine = 2-methyladenosine(2503) in 23S rRNA + 5'-deoxyadenosine + L-methionine + 2 oxidized [2Fe-2S]-[ferredoxin] + S-adenosyl-L-homocysteine. The enzyme catalyses adenosine(37) in tRNA + 2 reduced [2Fe-2S]-[ferredoxin] + 2 S-adenosyl-L-methionine = 2-methyladenosine(37) in tRNA + 5'-deoxyadenosine + L-methionine + 2 oxidized [2Fe-2S]-[ferredoxin] + S-adenosyl-L-homocysteine. Functionally, specifically methylates position 2 of adenine 2503 in 23S rRNA and position 2 of adenine 37 in tRNAs. m2A2503 modification seems to play a crucial role in the proofreading step occurring at the peptidyl transferase center and thus would serve to optimize ribosomal fidelity. The sequence is that of Dual-specificity RNA methyltransferase RlmN from Campylobacter concisus (strain 13826).